Reading from the N-terminus, the 130-residue chain is Small ribosomal subunit protein uS9 (130 aa).

It belongs to the universal ribosomal protein uS9 family.

This is Small ribosomal subunit protein uS9 from Xanthomonas axonopodis pv. citri (strain 306).